Here is a 237-residue protein sequence, read N- to C-terminus: Phosphoribosylaminoimidazole-succinocarboxamide synthase (237 aa).

Belongs to the SAICAR synthetase family.

It catalyses the reaction 5-amino-1-(5-phospho-D-ribosyl)imidazole-4-carboxylate + L-aspartate + ATP = (2S)-2-[5-amino-1-(5-phospho-beta-D-ribosyl)imidazole-4-carboxamido]succinate + ADP + phosphate + 2 H(+). It functions in the pathway purine metabolism; IMP biosynthesis via de novo pathway; 5-amino-1-(5-phospho-D-ribosyl)imidazole-4-carboxamide from 5-amino-1-(5-phospho-D-ribosyl)imidazole-4-carboxylate: step 1/2. This Listeria monocytogenes serotype 4a (strain HCC23) protein is Phosphoribosylaminoimidazole-succinocarboxamide synthase.